The chain runs to 668 residues: DNA ligase (668 aa).

NAD(+) contacts are provided by residues 34–38 (DTEYD), 83–84 (SL), and glutamate 114. Residue lysine 116 is the N6-AMP-lysine intermediate of the active site. NAD(+) contacts are provided by arginine 137, glutamate 171, lysine 286, and lysine 310. Zn(2+) contacts are provided by cysteine 404, cysteine 407, cysteine 422, and cysteine 427. Residues 588-668 (NSDSIIANKS…FFDLLKSEKG (81 aa)) form the BRCT domain.

The protein belongs to the NAD-dependent DNA ligase family. LigA subfamily. It depends on Mg(2+) as a cofactor. Mn(2+) is required as a cofactor.

The catalysed reaction is NAD(+) + (deoxyribonucleotide)n-3'-hydroxyl + 5'-phospho-(deoxyribonucleotide)m = (deoxyribonucleotide)n+m + AMP + beta-nicotinamide D-nucleotide.. Functionally, DNA ligase that catalyzes the formation of phosphodiester linkages between 5'-phosphoryl and 3'-hydroxyl groups in double-stranded DNA using NAD as a coenzyme and as the energy source for the reaction. It is essential for DNA replication and repair of damaged DNA. This is DNA ligase from Mycoplasma mycoides subsp. mycoides SC (strain CCUG 32753 / NCTC 10114 / PG1).